The chain runs to 255 residues: Putative cysteine-rich repeat secretory protein 32 (255 aa).

A signal peptide spans 1–28 (MYSSYSLFKCLVCFYILGIQVLIHSVSS). 2 consecutive Gnk2-homologous domains span residues 35 to 136 (YLHH…TINS) and 143 to 252 (YENT…LYPF).

The protein belongs to the cysteine-rich repeat secretory protein family.

It localises to the secreted. This chain is Putative cysteine-rich repeat secretory protein 32 (CRRSP32), found in Arabidopsis thaliana (Mouse-ear cress).